Here is a 92-residue protein sequence, read N- to C-terminus: Small ribosomal subunit protein uS19 (92 aa).

It belongs to the universal ribosomal protein uS19 family.

In terms of biological role, protein S19 forms a complex with S13 that binds strongly to the 16S ribosomal RNA. The chain is Small ribosomal subunit protein uS19 from Buchnera aphidicola subsp. Schizaphis graminum (strain Sg).